The following is a 261-amino-acid chain: Cytochrome c oxidase subunit 3 (261 aa).

At 1–15 (MTHQTHAYHMVNPSP) the chain is on the mitochondrial matrix side. Residues 16–34 (WPLTGALSALLMTSGLAMW) form a helical membrane-spanning segment. Residues 35-40 (FHFNST) lie on the Mitochondrial intermembrane side of the membrane. The helical transmembrane segment at 41-66 (LLLALGLLTNILTMYQWWRDIIREST) threads the bilayer. The Mitochondrial matrix segment spans residues 67–72 (FQGHHT). The helical transmembrane segment at 73-105 (SIVQKGLRYGMILFIISEVFFFSGFFWAFYHSS) threads the bilayer. The Mitochondrial intermembrane segment spans residues 106-128 (LAPTPELGGCWPPTGIHPLNPLE). A helical membrane pass occupies residues 129 to 152 (VPLLNTSVLLASGVSITWAHHSLM). The Mitochondrial matrix portion of the chain corresponds to 153–155 (EGN). The chain crosses the membrane as a helical span at residues 156–183 (RKNMLQGLFITISLGVYFTLLQASEYYE). Residues 184 to 190 (ASFTISD) lie on the Mitochondrial intermembrane side of the membrane. A helical membrane pass occupies residues 191-223 (GVYGSTFFVATGFHGLHVIIGSTFLIVCFLRQL). Residues 224-232 (KFHFTSSHH) lie on the Mitochondrial matrix side of the membrane. The chain crosses the membrane as a helical span at residues 233–256 (FGFEAAAWYWHFVDVVWLFLYVSI). Topologically, residues 257–261 (YWWGS) are mitochondrial intermembrane.

It belongs to the cytochrome c oxidase subunit 3 family. As to quaternary structure, component of the cytochrome c oxidase (complex IV, CIV), a multisubunit enzyme composed of 14 subunits. The complex is composed of a catalytic core of 3 subunits MT-CO1, MT-CO2 and MT-CO3, encoded in the mitochondrial DNA, and 11 supernumerary subunits COX4I, COX5A, COX5B, COX6A, COX6B, COX6C, COX7A, COX7B, COX7C, COX8 and NDUFA4, which are encoded in the nuclear genome. The complex exists as a monomer or a dimer and forms supercomplexes (SCs) in the inner mitochondrial membrane with NADH-ubiquinone oxidoreductase (complex I, CI) and ubiquinol-cytochrome c oxidoreductase (cytochrome b-c1 complex, complex III, CIII), resulting in different assemblies (supercomplex SCI(1)III(2)IV(1) and megacomplex MCI(2)III(2)IV(2)).

The protein localises to the mitochondrion inner membrane. The enzyme catalyses 4 Fe(II)-[cytochrome c] + O2 + 8 H(+)(in) = 4 Fe(III)-[cytochrome c] + 2 H2O + 4 H(+)(out). In terms of biological role, component of the cytochrome c oxidase, the last enzyme in the mitochondrial electron transport chain which drives oxidative phosphorylation. The respiratory chain contains 3 multisubunit complexes succinate dehydrogenase (complex II, CII), ubiquinol-cytochrome c oxidoreductase (cytochrome b-c1 complex, complex III, CIII) and cytochrome c oxidase (complex IV, CIV), that cooperate to transfer electrons derived from NADH and succinate to molecular oxygen, creating an electrochemical gradient over the inner membrane that drives transmembrane transport and the ATP synthase. Cytochrome c oxidase is the component of the respiratory chain that catalyzes the reduction of oxygen to water. Electrons originating from reduced cytochrome c in the intermembrane space (IMS) are transferred via the dinuclear copper A center (CU(A)) of subunit 2 and heme A of subunit 1 to the active site in subunit 1, a binuclear center (BNC) formed by heme A3 and copper B (CU(B)). The BNC reduces molecular oxygen to 2 water molecules using 4 electrons from cytochrome c in the IMS and 4 protons from the mitochondrial matrix. The chain is Cytochrome c oxidase subunit 3 (MT-CO3) from Equus asinus (Donkey).